The sequence spans 476 residues: Glycogen synthase (476 aa).

Residue Lys-15 coordinates ADP-alpha-D-glucose.

Belongs to the glycosyltransferase 1 family. Bacterial/plant glycogen synthase subfamily.

The catalysed reaction is [(1-&gt;4)-alpha-D-glucosyl](n) + ADP-alpha-D-glucose = [(1-&gt;4)-alpha-D-glucosyl](n+1) + ADP + H(+). Its pathway is glycan biosynthesis; glycogen biosynthesis. In terms of biological role, synthesizes alpha-1,4-glucan chains using ADP-glucose. In Streptococcus equi subsp. equi (strain 4047), this protein is Glycogen synthase.